A 346-amino-acid chain; its full sequence is Probable electron transfer flavoprotein subunit alpha, mitochondrial (346 aa).

285–313 (LYVAVGISGAIQHLAGMKESKMIVAINKD) contacts FAD.

It belongs to the ETF alpha-subunit/FixB family. Heterodimer of an alpha and a beta subunit. The cofactor is FAD.

It localises to the mitochondrion matrix. Functionally, the electron transfer flavoprotein serves as a specific electron acceptor for several dehydrogenases, including five acyl-CoA dehydrogenases, glutaryl-CoA and sarcosine dehydrogenase. It transfers the electrons to the main mitochondrial respiratory chain via ETF-ubiquinone oxidoreductase (ETF dehydrogenase). This is Probable electron transfer flavoprotein subunit alpha, mitochondrial (ETF1) from Cryptococcus neoformans var. grubii (Filobasidiella neoformans var. grubii).